A 287-amino-acid chain; its full sequence is Uroplakin-3a (287 aa).

The first 18 residues, 1-18 (MPPLWVVLALGCLRLGSG), serve as a signal peptide directing secretion. Over 19–207 (VNLQPQLASV…DTWPGRRSGG (189 aa)) the chain is Lumenal. 3 N-linked (GlcNAc...) asparagine glycosylation sites follow: Asn74, Asn139, and Asn170. The helical transmembrane segment at 208–235 (MIVITSILGSLPFFLLIGFAGAIVLSLV) threads the bilayer. Over 236–287 (DRGDADGATSHDSQITQEAVPKSLGTSEPSYTSVNRGPSLDRAEVYASKLQD) the chain is Cytoplasmic. The tract at residues 243-274 (ATSHDSQITQEAVPKSLGTSEPSYTSVNRGPS) is disordered. A compositionally biased stretch (polar residues) spans 259-271 (LGTSEPSYTSVNR).

It belongs to the uroplakin-3 family. Heterodimer with uroplakin-1B (UPK1B). Bladder epithelium.

The protein localises to the endoplasmic reticulum membrane. Its function is as follows. Component of the asymmetric unit membrane (AUM); a highly specialized biomembrane elaborated by terminally differentiated urothelial cells. May play an important role in AUM-cytoskeleton interaction in terminally differentiated urothelial cells. It also contributes to the formation of urothelial glycocalyx which may play an important role in preventing bacterial adherence. The protein is Uroplakin-3a (UPK3A) of Bos taurus (Bovine).